The primary structure comprises 334 residues: Biotin synthase (334 aa).

A Radical SAM core domain is found at 55-280; the sequence is EEIEVEGIIS…HTMLRFAGGR (226 aa). Residues Cys-70, Cys-74, and Cys-77 each coordinate [4Fe-4S] cluster. [2Fe-2S] cluster contacts are provided by Cys-113, Cys-205, and Arg-275.

It belongs to the radical SAM superfamily. Biotin synthase family. As to quaternary structure, homodimer. Requires [4Fe-4S] cluster as cofactor. [2Fe-2S] cluster serves as cofactor.

It carries out the reaction (4R,5S)-dethiobiotin + (sulfur carrier)-SH + 2 reduced [2Fe-2S]-[ferredoxin] + 2 S-adenosyl-L-methionine = (sulfur carrier)-H + biotin + 2 5'-deoxyadenosine + 2 L-methionine + 2 oxidized [2Fe-2S]-[ferredoxin]. It functions in the pathway cofactor biosynthesis; biotin biosynthesis; biotin from 7,8-diaminononanoate: step 2/2. Its function is as follows. Catalyzes the conversion of dethiobiotin (DTB) to biotin by the insertion of a sulfur atom into dethiobiotin via a radical-based mechanism. The chain is Biotin synthase from Corynebacterium glutamicum (strain R).